Reading from the N-terminus, the 560-residue chain is MRPEPGGCCCRRPMRANGCVKNGEVRNGYLRSSTATIAAAGQIHHITENGGLYKRPFNEAFEETPMLVAVLTYVGYGVLTLFGYLRDFLRHWRIEKCHHATEREEQKDFVSLYQDFENFYTRNLYMRIRDNWNRPICSVPGAKVDIMERQSHDYNWSFKYTGNIIKGVINMGSYNYLGFARNTGSCQEAAAEVLKTYGAGVCSTRQEIGNLDKHEELEKLVARFLGVEAALTYGMGFATNSMNIPALVGKGCLILSDELNHASLVLGARLSGATIRIFKHNNMQSLEKLLKDAIVYGQPRTRRPWKKILILVEGIYSMEGSIVRLPEVIALKKKYKAYLYLDEAHSIGALGPSGRGVVDYFGLDPEDVDVMMGTFTKSFGASGGYIGGKKELIDYLRTHSHSAVYATSMSPPVMEQIITSMKCIMGQDGTSLGKECIQQLAENTRYFRRRLKEMGFIIYGNEDSPVVPLMLYMPAKIGAFGREMLKRNIGVVVVGFPATPIIESRARFCLSAAHTKEILDTALKEIDEVGDLLQLKYSRHRPLPLLDRPFDETTYEETED.

Residues proline 65–leucine 85 traverse the membrane as a helical segment. Lysine 377 carries the N6-(pyridoxal phosphate)lysine modification.

Belongs to the class-II pyridoxal-phosphate-dependent aminotransferase family. As to quaternary structure, component of the serine palmitoyltransferase (SPT) complex, which is composed of SPTLC1, SPTLC2 or SPTLC3 and SPTSSA or SPTSSB. The heterodimer consisting of SPTLC1 and SPTLC2/SPTLC3 forms the catalytic core of the enzyme, while SPTSSA or SPTSSB subunits determine substrate specificity. SPT also interacts with ORMDL proteins, especially ORMDL3, which negatively regulate SPT activity in the presence of ceramides. Forms dimers of heterodimers with SPTLC1. Pyridoxal 5'-phosphate is required as a cofactor. Expressed in astrocytes.

The protein localises to the endoplasmic reticulum membrane. It catalyses the reaction L-serine + hexadecanoyl-CoA + H(+) = 3-oxosphinganine + CO2 + CoA. It carries out the reaction octadecanoyl-CoA + L-serine + H(+) = 3-oxoeicosasphinganine + CO2 + CoA. It participates in lipid metabolism; sphingolipid metabolism. With respect to regulation, SPT complex catalytic activity is negatively regulated by ORMDL proteins, including ORMDL3, in the presence of ceramides. This mechanism allows to maintain ceramide levels at sufficient concentrations for the production of complex sphingolipids, but which prevents the accumulation of ceramides to levels that trigger apoptosis. Functionally, component of the serine palmitoyltransferase multisubunit enzyme (SPT) that catalyzes the initial and rate-limiting step in sphingolipid biosynthesis by condensing L-serine and activated acyl-CoA (most commonly palmitoyl-CoA) to form long-chain bases. The SPT complex is composed of SPTLC1, SPTLC2 or SPTLC3 and SPTSSA or SPTSSB. Within this complex, the heterodimer consisting of SPTLC1 and SPTLC2/SPTLC3 forms the catalytic core. The composition of the serine palmitoyltransferase (SPT) complex determines the substrate preference. The SPTLC1-SPTLC2-SPTSSA complex shows a strong preference for C16-CoA substrate, while the SPTLC1-SPTLC3-SPTSSA isozyme uses both C14-CoA and C16-CoA as substrates, with a slight preference for C14-CoA. The SPTLC1-SPTLC2-SPTSSB complex shows a strong preference for C18-CoA substrate, while the SPTLC1-SPTLC3-SPTSSB isozyme displays an ability to use a broader range of acyl-CoAs, without apparent preference. Crucial for adipogenesis. The polypeptide is Serine palmitoyltransferase 2 (Rattus norvegicus (Rat)).